Here is a 171-residue protein sequence, read N- to C-terminus: uncharacterized protein (171 aa).

The helical transmembrane segment at 5-25 (FLLTIFALWVGGFGYYLYLIN) threads the bilayer.

It localises to the membrane. This is an uncharacterized protein from Rickettsia conorii (strain ATCC VR-613 / Malish 7).